A 513-amino-acid polypeptide reads, in one-letter code: ATP synthase subunit alpha (513 aa).

169–176 (GDRQTGKT) serves as a coordination point for ATP.

This sequence belongs to the ATPase alpha/beta chains family. In terms of assembly, F-type ATPases have 2 components, CF(1) - the catalytic core - and CF(0) - the membrane proton channel. CF(1) has five subunits: alpha(3), beta(3), gamma(1), delta(1), epsilon(1). CF(0) has three main subunits: a(1), b(2) and c(9-12). The alpha and beta chains form an alternating ring which encloses part of the gamma chain. CF(1) is attached to CF(0) by a central stalk formed by the gamma and epsilon chains, while a peripheral stalk is formed by the delta and b chains.

The protein localises to the cell inner membrane. The enzyme catalyses ATP + H2O + 4 H(+)(in) = ADP + phosphate + 5 H(+)(out). In terms of biological role, produces ATP from ADP in the presence of a proton gradient across the membrane. The alpha chain is a regulatory subunit. The sequence is that of ATP synthase subunit alpha from Actinobacillus pleuropneumoniae serotype 3 (strain JL03).